The following is a 532-amino-acid chain: Probable G-protein coupled receptor Mth-like 11 (532 aa).

Residues 1–20 (MGMFRVEYLLLGILVIGVRS) form the signal peptide. At 21 to 229 (RDIPNCDFFD…VRKSRLSNAS (209 aa)) the chain is on the extracellular side. Intrachain disulfides connect Cys-26–Cys-80, Cys-82–Cys-87, Cys-91–Cys-184, Cys-92–Cys-103, and Cys-145–Cys-204. Residue Asn-42 is glycosylated (N-linked (GlcNAc...) asparagine). Residues Asn-110, Asn-123, Asn-166, Asn-195, and Asn-227 are each glycosylated (N-linked (GlcNAc...) asparagine). A helical transmembrane segment spans residues 230–250 (IPVKFSSVFFMVITIAAYLWL). The Cytoplasmic segment spans residues 251–262 (PKFRSLHGKCCN). The helical transmembrane segment at 263–283 (LYFICLAITFLLNVISLFGIF) threads the bilayer. Topologically, residues 284 to 290 (ELKTPIC) are extracellular. Residues 291-311 (YLTGYAGYFTVMATFLWLSVI) traverse the membrane as a helical segment. Topologically, residues 312–339 (SFDVWRRFAMRKFQVFYKNKRSSFFNYN) are cytoplasmic. The chain crosses the membrane as a helical span at residues 340–360 (IIVWSSAGLLTCIIFLVDQFV). At 361-386 (ETNLDNPYNPAVGVFSCWIFTNGWSA) the chain is on the extracellular side. The chain crosses the membrane as a helical span at residues 387-407 (TFYFYAPLAILIILNCASFFL). The Cytoplasmic segment spans residues 408–439 (TTRYIYVENKQNQKVLNNSEPQKLSRNHANYR). A helical membrane pass occupies residues 440 to 460 (IYFRLFIIMGGSWFLEIIAFI). Residues 461-469 (CEMENMWKP) lie on the Extracellular side of the membrane. Residues 470–490 (LIILNDYINCSQGIIIFVATF) traverse the membrane as a helical segment. Topologically, residues 491–532 (CNHEMFRLIRKRIQNRNITSLELTNTSRPVESEKMADVELGK) are cytoplasmic.

It belongs to the G-protein coupled receptor 2 family. Mth subfamily.

The protein localises to the cell membrane. This chain is Probable G-protein coupled receptor Mth-like 11 (mthl11), found in Drosophila melanogaster (Fruit fly).